Consider the following 241-residue polypeptide: MFSNIDHKAVAALLHGQGCANILKTVLDNCKVSSVSTEPLINTILDSFSLALSSVNSPNRQPHHESSSRDMAGLVPQRSSKKKICGVKGLEIYRDDSPNPRLDDGFTWRKYGQKTIKTSLYQRCYYRCAYAKDQNCYATKRVQMIQDSPPVYRTTYLGQHTCKAFGVHDNTYGSEMINFDQVVSESVMRQLATIGEQAVLMEDEANHIMNQEYDINDYLVDDEVFWGNEFPLFSSEDLMLF.

Residues asparagine 56 to serine 79 form a disordered region. A DNA-binding region (WRKY) is located at residues serine 97 to phenylalanine 165.

It belongs to the WRKY group III family.

The protein resides in the nucleus. Transcription factor. Interacts specifically with the W box (5'-(T)TGAC[CT]-3'), a frequently occurring elicitor-responsive cis-acting element. This is Probable WRKY transcription factor 63 (WRKY63) from Arabidopsis thaliana (Mouse-ear cress).